Reading from the N-terminus, the 916-residue chain is Neurofilament medium polypeptide (916 aa).

Positions 1–10 are enriched in polar residues; sequence MSYTLDSLGN. The disordered stretch occupies residues 1–51; sequence MSYTLDSLGNPSAYRRVTETRSSFSRVSGSPSSGFRSQSWSRGSPSTVSSS. Ser2 carries the N-acetylserine modification. The interval 2 to 104 is head; it reads SYTLDSLGNP…KLSRSNEKEQ (103 aa). Residues 21–44 are compositionally biased toward low complexity; it reads RSSFSRVSGSPSSGFRSQSWSRGS. Ser30 carries the phosphoserine modification. The residue at position 42 (Arg42) is an Omega-N-methylarginine. A glycan (O-linked (GlcNAc) threonine) is linked at Thr47. Residue Ser99 is modified to Phosphoserine. The region spanning 101 to 412 is the IF rod domain; it reads EKEQLQGLND…KLLEGEETRF (312 aa). Residues 105-136 are coil 1A; that stretch reads LQGLNDRFAGYIEKVHYLEQQNKEIEAEIQAL. The tract at residues 137-149 is linker 1; sequence RQKQASHAQLGDA. The interval 150-248 is coil 1B; sequence YDQEIRELRA…EEEVADLLAQ (99 aa). Ser226 is subject to Phosphoserine. The linker 12 stretch occupies residues 249–265; the sequence is IQASHITVERKDYLKTD. The interval 266-287 is coil 2A; the sequence is ISTALKEIRSQLESHSDQNMHQ. A linker 2 region spans residues 288–291; the sequence is AEEW. The segment at 292–412 is coil 2B; sequence FKCRYAKLTE…KLLEGEETRF (121 aa). At Tyr320 the chain carries Phosphotyrosine. Phosphoserine occurs at positions 346 and 418. The tail stretch occupies residues 413–916; that stretch reads STFAGSITGP…AIVKEVTQSD (504 aa). O-linked (GlcNAc) threonine glycosylation is present at Thr431. A phosphoserine mark is found at Ser467 and Ser483. The interval 485-851 is disordered; it reads KEEKKEAAEE…KKGGDKSEEK (367 aa). The segment covering 493-505 has biased composition (acidic residues); sequence EEKEEEPEAEEEE. Ser511 is subject to Phosphoserine. A compositionally biased stretch (acidic residues) spans 521-541; the sequence is KEEEGEKEEEEGQEEEEEEDE. Basic and acidic residues predominate over residues 542–561; sequence GAKSDQAEEGGSEKEGSSEK. 4 positions are modified to phosphoserine: Ser545, Ser553, Ser558, and Ser559. A compositionally biased stretch (acidic residues) spans 562–582; it reads EEGEQEEGETEAEAEGEEAEA. Thr571 carries the phosphothreonine modification. Basic and acidic residues predominate over residues 583-614; the sequence is KEEKKVEEKSEEVATKEELVADAKVEKPEKAK. 6 repeat units span residues 614-626, 627-639, 640-652, 653-665, 666-678, and 679-691. The 6 X 13 AA approximate tandem repeats of K-S-P-V-[PS]-K-S-P-V-E-E-[KA]-[GAK] stretch occupies residues 614 to 691; the sequence is KSPVPKSPVE…VPKSPVEEAK (78 aa). A phosphoserine mark is found at Ser641 and Ser646. Phosphoserine is present on residues Ser680 and Ser685. Composition is skewed to basic and acidic residues over residues 686–701, 707–742, and 755–778; these read PVEEAKSKAEVGKGEQ, KEVKEAPKEEKVEKKEEKPKDVPEKKKAESPVKEEA, and VHLEKETKEEGKPLQQEKEKEKAG. Phosphoserine is present on Ser736. 3 positions are modified to phosphoserine: Ser783, Ser821, and Ser837. A compositionally biased stretch (basic and acidic residues) spans 788–828; it reads SDKGAKGSRKEDIAVNGEVEGKEEVEQETKEKGSGREEEKG. Basic and acidic residues predominate over residues 839–851; the sequence is ADEKKGGDKSEEK.

It belongs to the intermediate filament family. In terms of assembly, forms heterodimers with NEFL; which can further hetero-oligomerize (in vitro). Forms heterodimers with INA (in vitro). Post-translationally, there are a number of repeats of the tripeptide K-S-P, NFM is phosphorylated on a number of the serines in this motif. It is thought that phosphorylation of NFM results in the formation of interfilament cross bridges that are important in the maintenance of axonal caliber. Phosphorylation seems to play a major role in the functioning of the larger neurofilament polypeptides (NF-M and NF-H), the levels of phosphorylation being altered developmentally and coincidentally with a change in the neurofilament function. In terms of processing, phosphorylated in the head and rod regions by the PKC kinase PKN1, leading to the inhibition of polymerization.

The protein resides in the cytoplasm. Its subcellular location is the cytoskeleton. It localises to the cell projection. The protein localises to the axon. Neurofilaments usually contain three intermediate filament proteins: NEFL, NEFM, and NEFH which are involved in the maintenance of neuronal caliber. May additionally cooperate with the neuronal intermediate filament proteins PRPH and INA to form neuronal filamentous networks. The sequence is that of Neurofilament medium polypeptide (NEFM) from Homo sapiens (Human).